The primary structure comprises 396 residues: Subtilisin-like protease 5 (396 aa).

The first 20 residues, 1–20 (MTGFFTILSFSLAALSVTNA), serve as a signal peptide directing secretion. Positions 21 to 116 (AQILSVPKGA…VEPDAIISQH (96 aa)) are excised as a propeptide. An Inhibitor I9 domain is found at 37–113 (YIVVMKDDTS…VAFVEPDAII (77 aa)). N63 is a glycosylation site (N-linked (GlcNAc...) asparagine). The 272-residue stretch at 125-396 (PWGLSRLSNR…TRLLYNGSGR (272 aa)) folds into the Peptidase S8 domain. Active-site charge relay system residues include D156 and H187. Residues N230 and N248 are each glycosylated (N-linked (GlcNAc...) asparagine). S342 acts as the Charge relay system in catalysis. Polar residues predominate over residues 377–389 (TIRNPGPDTTTRL). Residues 377–396 (TIRNPGPDTTTRLLYNGSGR) are disordered. N-linked (GlcNAc...) asparagine glycosylation is present at N392.

Belongs to the peptidase S8 family.

The protein localises to the secreted. Its function is as follows. Secreted subtilisin-like serine protease with keratinolytic activity that contributes to pathogenicity. In Arthroderma benhamiae (Trichophyton mentagrophytes), this protein is Subtilisin-like protease 5 (SUB5).